The following is a 105-amino-acid chain: Oxytocin-neurophysin 1 (105 aa).

Cys1 and Cys6 are oxidised to a cystine. Gly9 carries the glycine amide modification. Disulfide bonds link Cys22/Cys66, Cys25/Cys39, Cys33/Cys56, Cys40/Cys46, Cys73/Cys85, Cys79/Cys97, and Cys86/Cys91.

The protein belongs to the vasopressin/oxytocin family. Interacts with oxytocin receptor (Ki=1.5 nM). Interacts with vasopressin V1aR/AVPR1A (Ki=37 nM), V1bR/AVPR1B (Ki=222 nM), and V2R/AVPR2 receptors (Ki=823 nM).

It localises to the secreted. Neurophysin 1 specifically binds oxytocin. In terms of biological role, oxytocin causes contraction of the smooth muscle of the uterus and of the mammary gland. Acts by binding to oxytocin receptor (OXTR). This is Oxytocin-neurophysin 1 (OXT) from Equus caballus (Horse).